Here is a 599-residue protein sequence, read N- to C-terminus: Elongation factor 4 (599 aa).

The region spanning 5–187 (SKIRNFSIVA…AIVKRLPAPT (183 aa)) is the tr-type G domain. GTP-binding positions include 17-22 (DHGKST) and 134-137 (NKID).

Belongs to the TRAFAC class translation factor GTPase superfamily. Classic translation factor GTPase family. LepA subfamily.

Its subcellular location is the cell inner membrane. It carries out the reaction GTP + H2O = GDP + phosphate + H(+). In terms of biological role, required for accurate and efficient protein synthesis under certain stress conditions. May act as a fidelity factor of the translation reaction, by catalyzing a one-codon backward translocation of tRNAs on improperly translocated ribosomes. Back-translocation proceeds from a post-translocation (POST) complex to a pre-translocation (PRE) complex, thus giving elongation factor G a second chance to translocate the tRNAs correctly. Binds to ribosomes in a GTP-dependent manner. The protein is Elongation factor 4 of Ruegeria sp. (strain TM1040) (Silicibacter sp.).